Reading from the N-terminus, the 193-residue chain is Dihydrofolate reductase (193 aa).

A DHFR domain is found at 1 to 193 (MIKLVFRYSP…VTTLTESVYK (193 aa)). Residues R7, 22–27 (FGLGDG), 52–55 (GAKT), and 73–77 (DLARD) contribute to the NADP(+) site.

It belongs to the dihydrofolate reductase family.

The enzyme catalyses (6S)-5,6,7,8-tetrahydrofolate + NADP(+) = 7,8-dihydrofolate + NADPH + H(+). Its pathway is cofactor biosynthesis; tetrahydrofolate biosynthesis; 5,6,7,8-tetrahydrofolate from 7,8-dihydrofolate: step 1/1. Key enzyme in folate metabolism. Catalyzes an essential reaction for de novo glycine and purine synthesis, and for DNA precursor synthesis. The chain is Dihydrofolate reductase (frd) from Escherichia coli (Bacteriophage T4).